Here is a 194-residue protein sequence, read N- to C-terminus: Fe/S biogenesis protein NfuA (194 aa).

The [4Fe-4S] cluster site is built by Cys-152 and Cys-155.

It belongs to the NfuA family. In terms of assembly, homodimer. Requires [4Fe-4S] cluster as cofactor.

Involved in iron-sulfur cluster biogenesis. Binds a 4Fe-4S cluster, can transfer this cluster to apoproteins, and thereby intervenes in the maturation of Fe/S proteins. Could also act as a scaffold/chaperone for damaged Fe/S proteins. The protein is Fe/S biogenesis protein NfuA of Azotobacter vinelandii (strain DJ / ATCC BAA-1303).